Consider the following 258-residue polypeptide: Glucanase inhibitor protein 1 (258 aa).

Positions 1 to 19 (MRVVPTLAAASLALGAVAG) are cleaved as a signal peptide. The Peptidase S1 domain occupies 27 to 254 (ILGGGEVPIG…AIEWITSVTK (228 aa)). The cysteines at positions 54 and 70 are disulfide-linked. 5 N-linked (GlcNAc...) asparagine glycosylation sites follow: N87, N102, N107, N157, and N185. Intrachain disulfides connect C177/C189 and C199/C230.

Belongs to the peptidase S1 family. As to quaternary structure, forms an apoplastic complex with host endoglucanases in tomato leaves during P.infestans infection.

It is found in the secreted. Its function is as follows. Secreted effector that suppresses host plant glucan elicitor-mediated defense responses. Targets host endoglucanases and inhibits the endoglucanase-mediated release of elicitor-active glucan oligosaccharides from P.infestans cell walls. This chain is Glucanase inhibitor protein 1, found in Phytophthora infestans (Potato late blight agent).